The primary structure comprises 651 residues: Zinc metalloproteinase nas-32 (651 aa).

The signal sequence occupies residues 1-21 (MRRFFICYIGFLSIFLDFILA). The propeptide occupies 22 to 202 (DKDNNSEEER…EQSSKSRRKK (181 aa)). N-linked (GlcNAc...) asparagine glycosylation is found at Asn-25, Asn-72, and Asn-251. In terms of domain architecture, Peptidase M12A spans 203-394 (RQIDNLAQFW…KMLNTHYSCS (192 aa)). Disulfide bonds link Cys-245-Cys-393, Cys-264-Cys-283, Cys-395-Cys-412, Cys-415-Cys-426, Cys-434-Cys-467, and Cys-495-Cys-516. His-291 serves as a coordination point for Zn(2+). Residue Glu-292 is part of the active site. 2 residues coordinate Zn(2+): His-295 and His-301. The EGF-like domain maps to 380-433 (TFLDLKMLNTHYSCSCPTILSCGNGGFTNPANCSVCICPYGFGGALCTERTDYG). Asn-411 carries N-linked (GlcNAc...) asparagine glycosylation. The CUB domain maps to 434–554 (CGSTLTATDT…TTYTWSYRYV (121 aa)). N-linked (GlcNAc...) asparagine glycosylation is present at Asn-453. N-linked (GlcNAc...) asparagine glycosylation is present at Asn-557. 3 disulfide bridges follow: Cys-610–Cys-647, Cys-619–Cys-640, and Cys-628–Cys-644. A ShKT domain is found at 610–647 (CKDRFPKSQCSTYSTNGMCTQQPPLAAEFSCAETCGFC).

Requires Zn(2+) as cofactor. Expressed in pharyngeal, anal depressor, intestinal and vulva muscles, head neurons and head mesodermal cell.

It is found in the secreted. Metalloprotease. In Caenorhabditis elegans, this protein is Zinc metalloproteinase nas-32 (nas-32).